Consider the following 253-residue polypeptide: Prolactin-7A2 (253 aa).

Residues 1–30 (MSFSFSQPCPSGALLLVVVSSLLLWENVAS) form the signal peptide. Residues N36, N103, and N135 are each glycosylated (N-linked (GlcNAc...) asparagine). Intrachain disulfides connect C101/C218 and C235/C244.

Belongs to the somatotropin/prolactin family. Expression restricted to the placental tissue. Expressed only in the spongiotrophoblasts.

Its subcellular location is the secreted. This Mus musculus (Mouse) protein is Prolactin-7A2 (Prl7a2).